The chain runs to 287 residues: Short-chain dehydrogenase virD (287 aa).

Residues Val-10, Thr-36, Asp-57, Asn-85, Tyr-149, Lys-153, Val-182, and Thr-184 each coordinate NADP(+). Tyr-149 functions as the Proton acceptor in the catalytic mechanism. Catalysis depends on Lys-153, which acts as the Lowers pKa of active site Tyr.

The protein belongs to the short-chain dehydrogenases/reductases (SDR) family.

The protein operates within secondary metabolite biosynthesis. Its function is as follows. Short-chain dehydrogenase; part of the gene cluster that mediates the biosynthesis of virensols and trichoxide, fungal natural products that contain or are derived from a salicylaldehyde core. The pathway begins with the synthesis of the reduced chain in virensol C by the highly reducing polyketide synthase virA via condensation of one acetate and 8 malonate units. VirA has interesting programming rules since the first 2 ketides are fully reduced, the 3 following ketides undergo beta-dehydration, and the last 3 ketides are only reduced to beta-hydroxys to yield the trihydroxy portion. The production of aldehyde virensol C by virA alone is surprising, since virA does not contain a reductase (R) domain that is typically associated with reductive product release in HRPKS. The cupin-domain enzyme virC is involved in enhancing virA product turnover. The short-chain dehydrogenase virB then oxidizes the C-7 alcohol of virensol C to a ketone, yielding virensol D. Virensol D is further transformed to salicylaldehyde 5-deoxyaurocitrin by the short-chain dehydrogenase virD. VirD catalyzes the dehydrogenation of C-3 to form the beta-ketone aldehyde, which is followed by the generation of the nucleophilic C-2 that is required for the intramolecular aldol condensation between C-2 and C-7, itself followed by dehydration and aromatization which leads to salicylaldehyde 5-deoxyaurocitrin. While the dehydrogenation of virensol D is definitely catalyzed by virD, the aldol condensation and dehydration may be uncatalyzed or assisted by virD. The short chain dehydrogenase virG then converts salicylaldehyde 5-deoxyaurocitrin into virensol B which is further hydroxylated by the cytochrome P450 monooxygenase virE to yield the hydroquinone virensol A. VirI then may oxidize virensol A to form the quinone, while virH performs the epoxidation. Finally, the two remaining short-chain dehydrogenases, virK and virL, are probably responsible for reducing the ketones to the corresponding alcohols to furnish the epoxycyclohexanol structure in trichoxide. The sequence is that of Short-chain dehydrogenase virD from Hypocrea virens (strain Gv29-8 / FGSC 10586) (Gliocladium virens).